Reading from the N-terminus, the 726-residue chain is Catalase-peroxidase (726 aa).

Positions 1–33 (MSTSDDIHNTTATGKCPFHQGGHDQSAGGGTTT) are disordered. Positions 105–226 (WHGAGTYRSI…LGATEMGLIY (122 aa)) form a cross-link, tryptophyl-tyrosyl-methioninium (Trp-Tyr) (with M-252). Catalysis depends on H106, which acts as the Proton acceptor. A cross-link (tryptophyl-tyrosyl-methioninium (Tyr-Met) (with W-105)) is located at residues 226 to 252 (YVNPEGPDHSGEPLSAAAAIRATFGNM). H267 serves as a coordination point for heme b.

It belongs to the peroxidase family. Peroxidase/catalase subfamily. As to quaternary structure, homodimer or homotetramer. The cofactor is heme b. Post-translationally, formation of the three residue Trp-Tyr-Met cross-link is important for the catalase, but not the peroxidase activity of the enzyme.

The enzyme catalyses H2O2 + AH2 = A + 2 H2O. It carries out the reaction 2 H2O2 = O2 + 2 H2O. Its function is as follows. Bifunctional enzyme with both catalase and broad-spectrum peroxidase activity. The chain is Catalase-peroxidase from Escherichia coli (strain UTI89 / UPEC).